The following is a 112-amino-acid chain: Tyrosine-protein phosphatase 7 (112 aa).

Residues 1-112 (NNVTIIVMIT…SSPESGPIVV (112 aa)) form the Tyrosine-protein phosphatase domain. Residue Asp82 participates in substrate binding.

Belongs to the protein-tyrosine phosphatase family.

The catalysed reaction is O-phospho-L-tyrosyl-[protein] + H2O = L-tyrosyl-[protein] + phosphate. This Styela plicata (Wrinkled sea squirt) protein is Tyrosine-protein phosphatase 7 (STY-7).